A 215-amino-acid chain; its full sequence is Pyrrolidone-carboxylate peptidase (215 aa).

Catalysis depends on residues Glu-80, Cys-143, and His-167.

This sequence belongs to the peptidase C15 family. In terms of assembly, homotetramer.

It is found in the cytoplasm. The catalysed reaction is Release of an N-terminal pyroglutamyl group from a polypeptide, the second amino acid generally not being Pro.. In terms of biological role, removes 5-oxoproline from various penultimate amino acid residues except L-proline. The protein is Pyrrolidone-carboxylate peptidase of Brevibacillus brevis (strain 47 / JCM 6285 / NBRC 100599).